The chain runs to 711 residues: Probable cadmium-transporting ATPase (711 aa).

The 64-residue stretch at 3–66 (EKTVYRVDGL…AGAFEHLKII (64 aa)) folds into the HMA domain. Cd(2+) is bound by residues Cys-14 and Cys-17. A run of 5 helical transmembrane segments spans residues 89 to 109 (WRLL…IMNG), 111 to 131 (DFYL…YSLF), 151 to 171 (IAII…VVIL), 317 to 337 (TPAI…LFGG), and 347 to 367 (LSVL…VAIV). Asp-398 acts as the 4-aspartylphosphate intermediate in catalysis. The helical transmembrane segment at 669 to 689 (VIKLIALLLVIPGWLTLWIAI) threads the bilayer.

The protein belongs to the cation transport ATPase (P-type) (TC 3.A.3) family. Type IB subfamily.

Its subcellular location is the cell membrane. It carries out the reaction Cd(2+)(in) + ATP + H2O = Cd(2+)(out) + ADP + phosphate + H(+). Its function is as follows. Couples the hydrolysis of ATP with the export of cadmium. The polypeptide is Probable cadmium-transporting ATPase (cadA) (Listeria monocytogenes).